The chain runs to 156 residues: UPF0251 protein Sfum_2819 (156 aa).

The protein belongs to the UPF0251 family.

The sequence is that of UPF0251 protein Sfum_2819 from Syntrophobacter fumaroxidans (strain DSM 10017 / MPOB).